Consider the following 346-residue polypeptide: tRNA N6-adenosine threonylcarbamoyltransferase (346 aa).

Residues histidine 117, histidine 121, and tyrosine 138 each contribute to the a divalent metal cation site. Substrate is bound by residues 138 to 142 (YVSGG), aspartate 170, glycine 185, and asparagine 277. Aspartate 305 is a binding site for a divalent metal cation.

The protein belongs to the KAE1 / TsaD family. In terms of assembly, component of the EKC/KEOPS complex composed of at least SPAP27G11.07c/BUD32, cgi121, gon7, pgp2 and SPAC4H3.13/PCC1; the whole complex dimerizes. A divalent metal cation serves as cofactor.

The protein localises to the cytoplasm. It localises to the nucleus. The enzyme catalyses L-threonylcarbamoyladenylate + adenosine(37) in tRNA = N(6)-L-threonylcarbamoyladenosine(37) in tRNA + AMP + H(+). In terms of biological role, component of the EKC/KEOPS complex that is required for the formation of a threonylcarbamoyl group on adenosine at position 37 (t(6)A37) in tRNAs that read codons beginning with adenine. The complex is probably involved in the transfer of the threonylcarbamoyl moiety of threonylcarbamoyl-AMP (TC-AMP) to the N6 group of A37. Pgp2 likely plays a direct catalytic role in this reaction, but requires other protein(s) of the complex to fulfill this activity. The EKC/KEOPS complex also promotes both telomere uncapping and telomere elongation. The complex is required for efficient recruitment of transcriptional coactivators. This is tRNA N6-adenosine threonylcarbamoyltransferase (pgp2) from Schizosaccharomyces pombe (strain 972 / ATCC 24843) (Fission yeast).